The sequence spans 609 residues: Chaperone protein DnaK (609 aa).

Thr173 carries the phosphothreonine; by autocatalysis modification. Over residues Glu525–Leu542 the composition is skewed to basic and acidic residues. Disordered stretches follow at residues Glu525–Ile554 and Glu574–Lys609. Low complexity predominate over residues Glu574–Gln587. A compositionally biased stretch (basic and acidic residues) spans Ala597–Lys609.

The protein belongs to the heat shock protein 70 family.

Functionally, acts as a chaperone. In Staphylococcus epidermidis (strain ATCC 35984 / DSM 28319 / BCRC 17069 / CCUG 31568 / BM 3577 / RP62A), this protein is Chaperone protein DnaK.